The primary structure comprises 211 residues: Thiamine-phosphate synthase (211 aa).

Residues 38 to 42 (QLREK) and Asn-70 each bind 4-amino-2-methyl-5-(diphosphooxymethyl)pyrimidine. The Mg(2+) site is built by Asp-71 and Asp-90. Ser-109 lines the 4-amino-2-methyl-5-(diphosphooxymethyl)pyrimidine pocket. 2-[(2R,5Z)-2-carboxy-4-methylthiazol-5(2H)-ylidene]ethyl phosphate is bound at residue 135-137 (TST). Lys-138 provides a ligand contact to 4-amino-2-methyl-5-(diphosphooxymethyl)pyrimidine. Residues Gly-165 and 185–186 (IS) each bind 2-[(2R,5Z)-2-carboxy-4-methylthiazol-5(2H)-ylidene]ethyl phosphate.

This sequence belongs to the thiamine-phosphate synthase family. It depends on Mg(2+) as a cofactor.

The catalysed reaction is 2-[(2R,5Z)-2-carboxy-4-methylthiazol-5(2H)-ylidene]ethyl phosphate + 4-amino-2-methyl-5-(diphosphooxymethyl)pyrimidine + 2 H(+) = thiamine phosphate + CO2 + diphosphate. It catalyses the reaction 2-(2-carboxy-4-methylthiazol-5-yl)ethyl phosphate + 4-amino-2-methyl-5-(diphosphooxymethyl)pyrimidine + 2 H(+) = thiamine phosphate + CO2 + diphosphate. It carries out the reaction 4-methyl-5-(2-phosphooxyethyl)-thiazole + 4-amino-2-methyl-5-(diphosphooxymethyl)pyrimidine + H(+) = thiamine phosphate + diphosphate. It participates in cofactor biosynthesis; thiamine diphosphate biosynthesis; thiamine phosphate from 4-amino-2-methyl-5-diphosphomethylpyrimidine and 4-methyl-5-(2-phosphoethyl)-thiazole: step 1/1. Its function is as follows. Condenses 4-methyl-5-(beta-hydroxyethyl)thiazole monophosphate (THZ-P) and 2-methyl-4-amino-5-hydroxymethyl pyrimidine pyrophosphate (HMP-PP) to form thiamine monophosphate (TMP). The sequence is that of Thiamine-phosphate synthase from Clostridium acetobutylicum (strain ATCC 824 / DSM 792 / JCM 1419 / IAM 19013 / LMG 5710 / NBRC 13948 / NRRL B-527 / VKM B-1787 / 2291 / W).